The chain runs to 89 residues: Small ribosomal subunit protein uS15 (89 aa).

The protein belongs to the universal ribosomal protein uS15 family. Part of the 30S ribosomal subunit. Forms a bridge to the 50S subunit in the 70S ribosome, contacting the 23S rRNA.

Functionally, one of the primary rRNA binding proteins, it binds directly to 16S rRNA where it helps nucleate assembly of the platform of the 30S subunit by binding and bridging several RNA helices of the 16S rRNA. Forms an intersubunit bridge (bridge B4) with the 23S rRNA of the 50S subunit in the ribosome. The sequence is that of Small ribosomal subunit protein uS15 from Streptococcus uberis (strain ATCC BAA-854 / 0140J).